The chain runs to 341 residues: GTP 3',8-cyclase (341 aa).

The 221-residue stretch at 11–231 (KRERPLRDLR…DLINQHMPTE (221 aa)) folds into the Radical SAM core domain. R20 contributes to the GTP binding site. [4Fe-4S] cluster is bound by residues C27 and C31. Position 33 (Y33) interacts with S-adenosyl-L-methionine. C34 provides a ligand contact to [4Fe-4S] cluster. R75 is a GTP binding site. G79 is an S-adenosyl-L-methionine binding site. Position 106 (T106) interacts with GTP. S130 contributes to the S-adenosyl-L-methionine binding site. A GTP-binding site is contributed by K167. An S-adenosyl-L-methionine-binding site is contributed by M201. Positions 265 and 268 each coordinate [4Fe-4S] cluster. 270-272 (RAR) contributes to the GTP binding site. A [4Fe-4S] cluster-binding site is contributed by C282.

The protein belongs to the radical SAM superfamily. MoaA family. As to quaternary structure, monomer and homodimer. Requires [4Fe-4S] cluster as cofactor.

It catalyses the reaction GTP + AH2 + S-adenosyl-L-methionine = (8S)-3',8-cyclo-7,8-dihydroguanosine 5'-triphosphate + 5'-deoxyadenosine + L-methionine + A + H(+). The protein operates within cofactor biosynthesis; molybdopterin biosynthesis. Its function is as follows. Catalyzes the cyclization of GTP to (8S)-3',8-cyclo-7,8-dihydroguanosine 5'-triphosphate. In Bacillus velezensis (strain DSM 23117 / BGSC 10A6 / LMG 26770 / FZB42) (Bacillus amyloliquefaciens subsp. plantarum), this protein is GTP 3',8-cyclase.